We begin with the raw amino-acid sequence, 354 residues long: MSAEARKTETIPEWKQEEIDELVAFLERYESVGVVDITGIPSRQLQDMRRDLHGTAALRVSRNTLMERALNEGGDGLGELVEHVEGQVGLIGTNDNPFGLYQQLEESKTPAPINAGEVAPNDIVIPEGDTGVDPGPFVGDLQQVGANARIEGGSIKVVEDSTVLSAGEEVSSDLSNVLSELGIEPKEVGLDLRGVSSEGVLFSPEELDIDVESYRTDIESAASAARNLSVNAEYPTARTAPSMLAKAAGEAKSVGLSAAVESPDLADDLVSKADAQVRALAAQIDDEEALPEELQDVEQPAAADSAAEADDEDDTGNVEQTDESDADDADDADDADDADEEDGDGGDALGDMFG.

Acidic residues-rich tracts occupy residues 286–296 (DEEALPEELQD) and 307–345 (AEAD…DGDG). Residues 286-354 (DEEALPEELQ…GGDALGDMFG (69 aa)) are disordered.

Belongs to the universal ribosomal protein uL10 family. Part of the 50S ribosomal subunit. Forms part of the ribosomal stalk which helps the ribosome interact with GTP-bound translation factors. Forms a heptameric L10(L12)2(L12)2(L12)2 complex, where L10 forms an elongated spine to which the L12 dimers bind in a sequential fashion.

In terms of biological role, forms part of the ribosomal stalk, playing a central role in the interaction of the ribosome with GTP-bound translation factors. This is Large ribosomal subunit protein uL10 from Natronomonas pharaonis (strain ATCC 35678 / DSM 2160 / CIP 103997 / JCM 8858 / NBRC 14720 / NCIMB 2260 / Gabara) (Halobacterium pharaonis).